We begin with the raw amino-acid sequence, 88 residues long: Acylphosphatase (88 aa).

One can recognise an Acylphosphatase-like domain in the interval 3–88; it reads AARFVVSGVV…VPPTEDFVTG (86 aa). Residues Arg18 and Asn36 contribute to the active site.

It belongs to the acylphosphatase family.

It carries out the reaction an acyl phosphate + H2O = a carboxylate + phosphate + H(+). This Xanthomonas euvesicatoria pv. vesicatoria (strain 85-10) (Xanthomonas campestris pv. vesicatoria) protein is Acylphosphatase (acyP).